A 228-amino-acid chain; its full sequence is Probable 26S proteasome regulatory subunit p28 (228 aa).

ANK repeat units follow at residues 1 to 30, 35 to 64, 71 to 100, 106 to 135, 139 to 168, and 173 to 203; these read MSNY…SLLL, DGRI…NVNL, SGWT…KPDL, QGVT…SVRI, FNQI…SAVN, and QGWT…EYDL.

As to quaternary structure, interacts with RPT3.

In terms of biological role, acts as a chaperone during the assembly of the 26S proteasome, specifically of the 19S regulatory complex (RC) and appears to have an overlapping role with RPN14. In Saccharomyces cerevisiae (strain ATCC 204508 / S288c) (Baker's yeast), this protein is Probable 26S proteasome regulatory subunit p28 (NAS6).